The sequence spans 514 residues: MVYRNILQLSVLKVLLIVLIVEATHFGVKYELWQPECELTAELRKTAGVAKMKVNSDLNSFKTLELTKMKLLTFAAKFPESKEALTLRALEAALNTDLRALRDNIANGIDRAVRATAYASEAAGALFSGIQTLHDATDGTTYCLSASGQGSNGNAAMASQGCKPLALPELLTEDSYNTDVISDKGFPKISPLTNAQGQGKSGECGLFQAASGAQATNTGVQFSGGSRINLGLGAIVASAAQQPTRPDLSDFSGTARNQADTLYGKAHASITELLQLAQGPKPGQTEVETMKLLAQKTAALDSIKFQLAASTGKKTSDYKEDENLKTEYFGKTESNIEALWNKVKEEKVKGADPEDPSKESKISDLNTEEQLQRVLDYYAVATMLKLAKQAEDIAKLETEIADQRGKSPEAECNKITEEPKCSEEKICSWHKEVKAGEKNCQFNSTKASKSGVPVTQTQTAGADTTAEKCKGKGEKDCKSPDCKWEGGTCKDSSILANKQFALSVASAAFVALLF.

An N-terminal signal peptide occupies residues 1–23; sequence MVYRNILQLSVLKVLLIVLIVEA. Cystine bridges form between Cys37–Cys162 and Cys143–Cys204. Asn443 is a glycosylation site (N-linked (GlcNAc...) asparagine). Residues 451–476 form a disordered region; it reads GVPVTQTQTAGADTTAEKCKGKGEKD. Residues 455-464 show a composition bias toward low complexity; it reads TQTQTAGADT. A compositionally biased stretch (basic and acidic residues) spans 465–476; sequence TAEKCKGKGEKD. Asp491 is lipidated: GPI-anchor amidated aspartate. Positions 492–514 are cleaved as a propeptide — removed in mature form; the sequence is SSILANKQFALSVASAAFVALLF.

The protein resides in the cell membrane. In terms of biological role, VSG forms a coat on the surface of the parasite. The trypanosome evades the immune response of the host by expressing a series of antigenically distinct VSGs from an estimated 1000 VSG genes. This Trypanosoma brucei brucei protein is Variant surface glycoprotein ILTAT 1.24.